Here is a 236-residue protein sequence, read N- to C-terminus: N-acetyl-alpha-D-glucosaminyl L-malate deacetylase 1 (236 aa).

Zn(2+) is bound by residues H12, D15, and H113.

This sequence belongs to the PIGL family. It depends on Zn(2+) as a cofactor.

The catalysed reaction is (S)-malyl N-acetyl-alpha-D-glucosaminide + H2O = (S)-malyl alpha-D-glucosaminide + acetate. Involved in bacillithiol (BSH) biosynthesis. Catalyzes the second step of the pathway, the deacetylation of N-acetylglucosaminylmalate (GlcNAc-Mal) to glucosamine malate (GlcN-Mal). The chain is N-acetyl-alpha-D-glucosaminyl L-malate deacetylase 1 from Bacillus subtilis (strain 168).